The primary structure comprises 242 residues: 7-cyano-7-deazaguanine synthase (242 aa).

The tract at residues Met-1–Asp-22 is disordered. Leu-32–Leu-42 serves as a coordination point for ATP. Zn(2+)-binding residues include Cys-212, Cys-221, Cys-224, and Cys-227.

It belongs to the QueC family. Requires Zn(2+) as cofactor.

The catalysed reaction is 7-carboxy-7-deazaguanine + NH4(+) + ATP = 7-cyano-7-deazaguanine + ADP + phosphate + H2O + H(+). It functions in the pathway purine metabolism; 7-cyano-7-deazaguanine biosynthesis. In terms of biological role, catalyzes the ATP-dependent conversion of 7-carboxy-7-deazaguanine (CDG) to 7-cyano-7-deazaguanine (preQ(0)). The sequence is that of 7-cyano-7-deazaguanine synthase from Leptospira interrogans serogroup Icterohaemorrhagiae serovar copenhageni (strain Fiocruz L1-130).